Reading from the N-terminus, the 714-residue chain is Fatty acid oxidation complex subunit alpha (714 aa).

An enoyl-CoA hydratase region spans residues 1–190 (MEMASAFTLN…KLGLVDDVVP (190 aa)). Residues 306–714 (APLNSVGILG…FWKTTATDLQ (409 aa)) are 3-hydroxyacyl-CoA dehydrogenase.

This sequence in the N-terminal section; belongs to the enoyl-CoA hydratase/isomerase family. In the central section; belongs to the 3-hydroxyacyl-CoA dehydrogenase family. Heterotetramer of two alpha chains (FadJ) and two beta chains (FadI).

The protein resides in the cytoplasm. It catalyses the reaction a (3S)-3-hydroxyacyl-CoA = a (2E)-enoyl-CoA + H2O. The enzyme catalyses a 4-saturated-(3S)-3-hydroxyacyl-CoA = a (3E)-enoyl-CoA + H2O. The catalysed reaction is a (3S)-3-hydroxyacyl-CoA + NAD(+) = a 3-oxoacyl-CoA + NADH + H(+). It carries out the reaction (3S)-3-hydroxybutanoyl-CoA = (3R)-3-hydroxybutanoyl-CoA. Its pathway is lipid metabolism; fatty acid beta-oxidation. Its function is as follows. Catalyzes the formation of a hydroxyacyl-CoA by addition of water on enoyl-CoA. Also exhibits 3-hydroxyacyl-CoA epimerase and 3-hydroxyacyl-CoA dehydrogenase activities. This chain is Fatty acid oxidation complex subunit alpha, found in Escherichia coli (strain ATCC 8739 / DSM 1576 / NBRC 3972 / NCIMB 8545 / WDCM 00012 / Crooks).